A 910-amino-acid polypeptide reads, in one-letter code: Putative disease resistance protein At1g58400 (910 aa).

Positions 15–57 (DRLTQEYEQFQGVEDRIAELKSNLNLLKSFLKDAEAKKNTSQM) form a coiled coil. The NB-ARC domain occupies 148–460 (REREMRQTFS…AEGILEPRHY (313 aa)). ATP is bound at residue 191–198 (GMGGLGKT). 2 LRR repeats span residues 580–604 (LELLRVLDLYKAKFEGRNLPSGIGK) and 605–628 (LIHLRYLNLDLARVSRLPSSLGNL).

Belongs to the disease resistance NB-LRR family.

Its function is as follows. Potential disease resistance protein. This is Putative disease resistance protein At1g58400 from Arabidopsis thaliana (Mouse-ear cress).